The chain runs to 570 residues: Laccase-3 (570 aa).

An N-terminal signal peptide occupies residues 1 to 25 (MESFRRFSLLSFIALLAYFAFLASA). Plastocyanin-like domains follow at residues 33–149 (VITP…PRLG) and 159–310 (RDIP…YVNA). A glycan (N-linked (GlcNAc...) asparagine) is linked at Asn79. His83, His85, His128, and His130 together coordinate Cu cation. N-linked (GlcNAc...) asparagine glycosylation is found at Asn188, Asn298, Asn332, Asn383, Asn393, and Asn433. The region spanning 419 to 554 (DFPPVPPVQF…AMVFLVENGR (136 aa)) is the Plastocyanin-like 3 domain. 7 residues coordinate Cu cation: His471, His474, His476, His533, Cys534, His535, and His539.

Belongs to the multicopper oxidase family. Requires Cu cation as cofactor. Mostly expressed in roots and siliques.

The protein localises to the secreted. It localises to the extracellular space. It is found in the apoplast. The enzyme catalyses 4 hydroquinone + O2 = 4 benzosemiquinone + 2 H2O. In terms of biological role, lignin degradation and detoxification of lignin-derived products. The protein is Laccase-3 (LAC3) of Arabidopsis thaliana (Mouse-ear cress).